Reading from the N-terminus, the 232-residue chain is Octanoyltransferase (232 aa).

Positions 43-231 (LPTSNYLLFV…HLTHLFEAEI (189 aa)) constitute a BPL/LPL catalytic domain. Substrate-binding positions include 88–95 (RGGDITYH), 160–162 (AMG), and 173–175 (GFA). Cysteine 191 (acyl-thioester intermediate) is an active-site residue.

The protein belongs to the LipB family.

The protein resides in the cytoplasm. The enzyme catalyses octanoyl-[ACP] + L-lysyl-[protein] = N(6)-octanoyl-L-lysyl-[protein] + holo-[ACP] + H(+). Its pathway is protein modification; protein lipoylation via endogenous pathway; protein N(6)-(lipoyl)lysine from octanoyl-[acyl-carrier-protein]: step 1/2. Its function is as follows. Catalyzes the transfer of endogenously produced octanoic acid from octanoyl-acyl-carrier-protein onto the lipoyl domains of lipoate-dependent enzymes. Lipoyl-ACP can also act as a substrate although octanoyl-ACP is likely to be the physiological substrate. In Flavobacterium johnsoniae (strain ATCC 17061 / DSM 2064 / JCM 8514 / BCRC 14874 / CCUG 350202 / NBRC 14942 / NCIMB 11054 / UW101) (Cytophaga johnsonae), this protein is Octanoyltransferase.